The following is a 351-amino-acid chain: Phospho-N-acetylmuramoyl-pentapeptide-transferase (351 aa).

A run of 10 helical transmembrane segments spans residues T17–S37, M61–I83, I88–F105, I130–I150, S158–A178, G190–T210, L230–Y250, I254–I274, I279–V299, and Q328–I348.

It belongs to the glycosyltransferase 4 family. MraY subfamily. The cofactor is Mg(2+).

The protein resides in the cell inner membrane. The enzyme catalyses UDP-N-acetyl-alpha-D-muramoyl-L-alanyl-gamma-D-glutamyl-meso-2,6-diaminopimeloyl-D-alanyl-D-alanine + di-trans,octa-cis-undecaprenyl phosphate = di-trans,octa-cis-undecaprenyl diphospho-N-acetyl-alpha-D-muramoyl-L-alanyl-D-glutamyl-meso-2,6-diaminopimeloyl-D-alanyl-D-alanine + UMP. The protein operates within cell wall biogenesis; peptidoglycan biosynthesis. In terms of biological role, catalyzes the initial step of the lipid cycle reactions in the biosynthesis of the cell wall peptidoglycan: transfers peptidoglycan precursor phospho-MurNAc-pentapeptide from UDP-MurNAc-pentapeptide onto the lipid carrier undecaprenyl phosphate, yielding undecaprenyl-pyrophosphoryl-MurNAc-pentapeptide, known as lipid I. The sequence is that of Phospho-N-acetylmuramoyl-pentapeptide-transferase from Borrelia duttonii (strain Ly).